The following is a 594-amino-acid chain: Probable methylenetetrahydrofolate reductase (NADH) (594 aa).

E21 acts as the Proton donor/acceptor in catalysis. NAD(+) is bound by residues 21-26 and 52-53; these read EYFPPK and TW. FAD-binding positions include 52–53, H81, 111–113, Y153, 157–160, D175, and K182; these read TW, RGD, and HPDA. D113 is a binding site for substrate. Positions 193 and 285 each coordinate substrate.

It belongs to the methylenetetrahydrofolate reductase family. Homodimer. The cofactor is FAD.

It carries out the reaction (6S)-5-methyl-5,6,7,8-tetrahydrofolate + NAD(+) = (6R)-5,10-methylene-5,6,7,8-tetrahydrofolate + NADH + H(+). The protein operates within one-carbon metabolism; tetrahydrofolate interconversion. Plant MTHFRs strongly prefer NADH over NADPH. Not inhibited by methionine or S-adenosylmethionine. Its function is as follows. The probable reversibility of the MTHFR reaction in plants suggests that they can metabolize the methyl group of 5,10-methylenetetrahydrofolate to serine, sugars and starch. The polypeptide is Probable methylenetetrahydrofolate reductase (NADH) (Oryza sativa subsp. japonica (Rice)).